A 131-amino-acid polypeptide reads, in one-letter code: Ponticulin-like protein M (131 aa).

Positions 1–19 are cleaved as a signal peptide; that stretch reads MKFLSTLILLLSVLALVRG. Residue S106 is the site of GPI-like-anchor amidated serine attachment. A propeptide spans 107-131 (removed in mature form); that stretch reads NSASSPLTTAVLFVVAFAAAIALLL.

This sequence belongs to the ponticulin family. In terms of processing, the GPI-like-anchor contains a phosphoceramide group, rather than a phosphatidyl group.

Its subcellular location is the cell membrane. Functionally, binds F-actin and nucleates actin assembly. The sequence is that of Ponticulin-like protein M (ponM) from Dictyostelium discoideum (Social amoeba).